We begin with the raw amino-acid sequence, 428 residues long: Dihydrolipoyllysine-residue acetyltransferase component of pyruvate dehydrogenase complex (428 aa).

Positions 2–77 (AFEFKLPDIG…TVGQTLITLD (76 aa)) constitute a Lipoyl-binding domain. An N6-lipoyllysine modification is found at lysine 43. Residues 88-123 (GQEQEEAKKEEKTETVSKEEKVDAVAPNAPAAEAEA) are disordered. Positions 89–110 (QEQEEAKKEEKTETVSKEEKVD) are enriched in basic and acidic residues. Positions 111–123 (AVAPNAPAAEAEA) are enriched in low complexity. The Peripheral subunit-binding (PSBD) domain maps to 130 to 167 (IAMPSVRKYAREKGVDIRLVQGTGKNGRVLKEDIDAFL). Residues 177 to 194 (AAEEKAAPAAAKPATTEG) show a composition bias toward low complexity. Positions 177–201 (AAEEKAAPAAAKPATTEGEFPETRE) are disordered. Histidine 399 is a catalytic residue.

Belongs to the 2-oxoacid dehydrogenase family. As to quaternary structure, forms a 60-polypeptide structural core with icosahedral symmetry. (R)-lipoate serves as cofactor.

The catalysed reaction is N(6)-[(R)-dihydrolipoyl]-L-lysyl-[protein] + acetyl-CoA = N(6)-[(R)-S(8)-acetyldihydrolipoyl]-L-lysyl-[protein] + CoA. Its function is as follows. The pyruvate dehydrogenase complex catalyzes the overall conversion of pyruvate to acetyl-CoA and CO(2). It contains multiple copies of three enzymatic components: pyruvate dehydrogenase (E1), dihydrolipoamide acetyltransferase (E2) and lipoamide dehydrogenase (E3). The chain is Dihydrolipoyllysine-residue acetyltransferase component of pyruvate dehydrogenase complex (pdhC) from Geobacillus stearothermophilus (Bacillus stearothermophilus).